We begin with the raw amino-acid sequence, 93 residues long: Histone H2B (93 aa).

A compositionally biased stretch (low complexity) spans 1–12 (MPEPAKSAPAPK). Positions 1–31 (MPEPAKSAPAPKKGSKKAVTKTQKKGDKKRX) are disordered. N6-acetyllysine occurs at positions 6 and 13. The segment covering 13–28 (KGSKKAVTKTQKKGDK) has biased composition (basic residues). The residue at position 15 (Ser15) is a Phosphoserine. 2 positions are modified to N6-acetyllysine: Lys16 and Lys21.

This sequence belongs to the histone H2B family. In terms of assembly, the nucleosome is a histone octamer containing two molecules each of H2A, H2B, H3 and H4 assembled in one H3-H4 heterotetramer and two H2A-H2B heterodimers. The octamer wraps approximately 147 bp of DNA. Post-translationally, monoubiquitination at the C-terminal Lys gives a specific tag for epigenetic transcriptional activation and is also prerequisite for histone H3 'Lys-4' and 'Lys-79' methylation. In terms of processing, phosphorylated on Ser-15 during apoptosis; which facilitates apoptotic chromatin condensation.

It localises to the nucleus. It is found in the chromosome. In terms of biological role, core component of nucleosome. Nucleosomes wrap and compact DNA into chromatin, limiting DNA accessibility to the cellular machineries which require DNA as a template. Histones thereby play a central role in transcription regulation, DNA repair, DNA replication and chromosomal stability. DNA accessibility is regulated via a complex set of post-translational modifications of histones, also called histone code, and nucleosome remodeling. The polypeptide is Histone H2B (Crocodylus niloticus (Nile crocodile)).